Consider the following 358-residue polypeptide: MTPPPPKRQKRDEYRKATAEATSQSGASDVAEIKLPKKKYYRQRAHANPFSDHHLKYPLSPAHMDWSSHYPAFVNPDPSHINLAGARRLLKDVEVVDIGCGFGGLLIGLAPLLPESLIVGMEIRVSVLEYVTTRIQALRAQQQKLRAATATATAASETPSQQQAQIDGKQANANAAADAASPAPSTDTEHMPTTLVPGSYENISAIRSNTMKFFPNFFARHQLSKIFICFPDPHFKARKHKARIISETLNAEYAYALRPGGLLYTITDVEEYHHWILRHFGVELGAEEESEEKSTSPNANANAGVRELFERVSEEELEKDECVRVMKEATEEGKKVARNKGNKYVAVFRRKTDPEWPA.

The segment at 1-29 (MTPPPPKRQKRDEYRKATAEATSQSGASD) is disordered. Residues glycine 99 and 122 to 123 (EI) contribute to the S-adenosyl-L-methionine site. Residues 151–186 (TATAASETPSQQQAQIDGKQANANAAADAASPAPST) show a composition bias toward low complexity. The tract at residues 151–194 (TATAASETPSQQQAQIDGKQANANAAADAASPAPSTDTEHMPTT) is disordered. S-adenosyl-L-methionine-binding positions include 209-210 (NT) and cysteine 229. Residue aspartate 232 is part of the active site. 330–332 (TEE) lines the S-adenosyl-L-methionine pocket.

This sequence belongs to the class I-like SAM-binding methyltransferase superfamily. TrmB family. In terms of assembly, forms a complex with trm82.

The protein resides in the nucleus. It carries out the reaction guanosine(46) in tRNA + S-adenosyl-L-methionine = N(7)-methylguanosine(46) in tRNA + S-adenosyl-L-homocysteine. It functions in the pathway tRNA modification; N(7)-methylguanine-tRNA biosynthesis. Its function is as follows. Catalyzes the formation of N(7)-methylguanine at position 46 (m7G46) in tRNA. In Aspergillus fumigatus (strain ATCC MYA-4609 / CBS 101355 / FGSC A1100 / Af293) (Neosartorya fumigata), this protein is tRNA (guanine-N(7)-)-methyltransferase (trm8).